The chain runs to 444 residues: Killer cell immunoglobulin-like receptor 3DL1 (444 aa).

An N-terminal signal peptide occupies residues 1–21 (MSLMVVSMACVGLFLVQRAGP). The Extracellular portion of the chain corresponds to 22-340 (HMGGQDKPFL…SKSGNPRHLH (319 aa)). Ig-like C2-type domains follow at residues 42–102 (GGHV…HPHS), 137–202 (GERV…VTHT), and 237–300 (GESV…FRHS). Cystine bridges form between Cys-49-Cys-95, Cys-144-Cys-195, and Cys-244-Cys-293. Residues Asn-92, Asn-179, and Asn-273 are each glycosylated (N-linked (GlcNAc...) asparagine). The tract at residues 315 to 334 (VTGNPSSSWPSPTEPSSKSG) is disordered. Positions 319 to 333 (PSSSWPSPTEPSSKS) are enriched in low complexity. The helical transmembrane segment at 341 to 360 (ILIGTSVVIILFILLLFFLL) threads the bilayer. Topologically, residues 361-444 (HLWCSNKKNA…KPRSKVVSCP (84 aa)) are cytoplasmic. Disordered stretches follow at residues 375-394 (QEPA…QDPE) and 409-444 (RKIT…VSCP).

Belongs to the immunoglobulin superfamily.

The protein resides in the cell membrane. In terms of biological role, receptor on natural killer (NK) cells for HLA Bw4 allele. Inhibits the activity of NK cells thus preventing cell lysis. This is Killer cell immunoglobulin-like receptor 3DL1 from Homo sapiens (Human).